A 316-amino-acid chain; its full sequence is MNTSITARELFDLQRDRLSLRWIAGQQGEHRQIDSGDTRARRPSLAGYLNTIYPNKVQILGTEELTWLDSLEPNKRKETIEKIIQFQPLTLVISKNQSCPEDMRTAADNSQIPLWVSPKRGHELLNHLSYHLARILAPRATLHGVFMEIYSIGVLITGEAGSGKSELALELLSRGHRLVADDAPEFTQIAPDVLDGTCPEILQDLLEVRGLGVLNVRHMFGDTAIKKNKYLRLIVHLTKPITEPTPSGYERLTGDSGTRHVLDLDVPLITLPVMPGRNLAVLTEAATRLHILRTKGIDPATMFIARHSNLLERRPP.

Residues H143 and K164 contribute to the active site. Residue 158-165 (GEAGSGKS) coordinates ATP. Residue S165 coordinates Mg(2+). Catalysis depends on D182, which acts as the Proton acceptor; for phosphorylation activity. Proton donor; for dephosphorylation activity. An important for the catalytic mechanism of both phosphorylation and dephosphorylation region spans residues 206 to 215 (LEVRGLGVLN). E207 serves as a coordination point for Mg(2+). R251 is an active-site residue. The segment at 272-277 (PVMPGR) is important for the catalytic mechanism of dephosphorylation.

This sequence belongs to the HPrK/P family. As to quaternary structure, homohexamer. Mg(2+) serves as cofactor.

The catalysed reaction is [HPr protein]-L-serine + ATP = [HPr protein]-O-phospho-L-serine + ADP + H(+). It carries out the reaction [HPr protein]-O-phospho-L-serine + phosphate + H(+) = [HPr protein]-L-serine + diphosphate. In terms of biological role, catalyzes the ATP- as well as the pyrophosphate-dependent phosphorylation of a specific serine residue in HPr, a phosphocarrier protein of the phosphoenolpyruvate-dependent sugar phosphotransferase system (PTS). HprK/P also catalyzes the pyrophosphate-producing, inorganic phosphate-dependent dephosphorylation (phosphorolysis) of seryl-phosphorylated HPr (P-Ser-HPr). This chain is HPr kinase/phosphorylase, found in Xylella fastidiosa (strain 9a5c).